The following is a 365-amino-acid chain: Phospho-N-acetylmuramoyl-pentapeptide-transferase (365 aa).

The next 10 membrane-spanning stretches (helical) occupy residues 22–42, 74–94, 95–115, 134–154, 169–189, 201–221, 240–260, 268–288, 292–312, and 342–362; these read YVSV…LFLG, TMGG…WGSL, SSIY…IGFF, KFAL…YLLS, LHIP…INGS, GLAI…AYIQ, LAEV…FLWF, FMGD…AVMI, LIFF…MLQV, and KVVI…LVAI.

It belongs to the glycosyltransferase 4 family. MraY subfamily. Mg(2+) serves as cofactor.

It localises to the cell inner membrane. It carries out the reaction UDP-N-acetyl-alpha-D-muramoyl-L-alanyl-gamma-D-glutamyl-meso-2,6-diaminopimeloyl-D-alanyl-D-alanine + di-trans,octa-cis-undecaprenyl phosphate = di-trans,octa-cis-undecaprenyl diphospho-N-acetyl-alpha-D-muramoyl-L-alanyl-D-glutamyl-meso-2,6-diaminopimeloyl-D-alanyl-D-alanine + UMP. It functions in the pathway cell wall biogenesis; peptidoglycan biosynthesis. Catalyzes the initial step of the lipid cycle reactions in the biosynthesis of the cell wall peptidoglycan: transfers peptidoglycan precursor phospho-MurNAc-pentapeptide from UDP-MurNAc-pentapeptide onto the lipid carrier undecaprenyl phosphate, yielding undecaprenyl-pyrophosphoryl-MurNAc-pentapeptide, known as lipid I. This chain is Phospho-N-acetylmuramoyl-pentapeptide-transferase, found in Francisella philomiragia subsp. philomiragia (strain ATCC 25017 / CCUG 19701 / FSC 153 / O#319-036).